The following is a 393-amino-acid chain: Nucleosome assembly protein 1-like 1 (393 aa).

The span at 1-10 (MANIDNKEQT) shows a compositional bias: basic and acidic residues. Disordered stretches follow at residues 1–36 (MANIDNKEQTELDQQDMEDVEDIEEEEAGEDANSKA) and 132–165 (ECEWKVDEEEDISGDLKDKAKLEEEKKDEEKEDP). 2 stretches are compositionally biased toward acidic residues: residues 11 to 30 (ELDQQDMEDVEDIEEEEAGE) and 132 to 144 (ECEWKVDEEEDIS). Residues 126 to 151 (YEPTEEECEWKVDEEEDISGDLKDKA) carry the NAP1L motif motif. Basic and acidic residues predominate over residues 145 to 165 (GDLKDKAKLEEEKKDEEKEDP). The Nuclear localization signal motif lies at 274-280 (IKKKQKH). The span at 347–378 (AIEDDDDDYDEEGEEADDEEGEEEADEDNDPD) shows a compositional bias: acidic residues. A disordered region spans residues 347 to 393 (AIEDDDDDYDEEGEEADDEEGEEEADEDNDPDYEPKKDQNPAECKQQ). Positions 379–393 (YEPKKDQNPAECKQQ) are enriched in basic and acidic residues.

This sequence belongs to the nucleosome assembly protein (NAP) family. Forms homomultimers. Interacts with histone B4. Interacts with the B-type cyclins ccnb1 and ccnb2. In terms of processing, phosphorylated by cyclin B-cdc2 kinase complexes.

Its subcellular location is the cytoplasm. The protein localises to the nucleus. In terms of biological role, acts as a chaperone for the linker histone to facilitate deposition of histone B4 onto linker DNA. Required for both remodeling of sperm chromatin into nucleosomes, and linker histone binding to nucleosome core dimers. Plays a role in tissue-specific gene regulation. Required for primitive hemopoiesis, acting upstream of tal1/scl. In Xenopus tropicalis (Western clawed frog), this protein is Nucleosome assembly protein 1-like 1.